A 327-amino-acid chain; its full sequence is Zinc finger C2HC domain-containing protein 1A (327 aa).

A C2HC/C3H-type 1 zinc finger spans residues 13-42; it reads ELVPCKICGRSFFPKVLKKHVPICQKTAAK. Zn(2+)-binding residues include cysteine 17, cysteine 20, histidine 32, and cysteine 36. 2 disordered regions span residues 40-96 and 108-131; these read AAKR…KHEE and NQVIKDGGPLPPPPPPSYDPDYIQ. Basic and acidic residues predominate over residues 46–56; it reads VFDSGRQRAEG. The span at 63 to 76 shows a compositional bias: low complexity; sequence KPIKPKLQSSSSSS. Positions 116-125 are enriched in pro residues; the sequence is PLPPPPPPSY. Residues 128 to 157 form a C2HC/C3H-type 2 zinc finger; that stretch reads DYIQCPYCQRRFGENAADRHIKFCKEQASR. Zn(2+) contacts are provided by cysteine 132, cysteine 135, histidine 147, and cysteine 151. Positions 154-271 are disordered; it reads QASRISNKSK…NPSTGIGMNK (118 aa). Polar residues predominate over residues 187 to 199; the sequence is NSPTASSVSSRLP. Residues 211-229 are compositionally biased toward low complexity; the sequence is GIPSSKPSSTGSIKSTPSG. Composition is skewed to polar residues over residues 233 to 245 and 255 to 267; these read LRNNSSSLTSPPS and VSQSSLRNPSTGI.

It belongs to the ZC2HC1 family. Zn(2+) serves as cofactor.

The protein is Zinc finger C2HC domain-containing protein 1A (zc2hc1a) of Danio rerio (Zebrafish).